A 176-amino-acid polypeptide reads, in one-letter code: Co-chaperone protein HscB homolog (176 aa).

Residues 7–79 (THFSLFGLPE…LKRATYLLHL (73 aa)) enclose the J domain.

The protein belongs to the HscB family. In terms of assembly, interacts with HscA and stimulates its ATPase activity.

Its function is as follows. Co-chaperone involved in the maturation of iron-sulfur cluster-containing proteins. Seems to help targeting proteins to be folded toward HscA. This chain is Co-chaperone protein HscB homolog, found in Ralstonia nicotianae (strain ATCC BAA-1114 / GMI1000) (Ralstonia solanacearum).